The following is a 340-amino-acid chain: Ketol-acid reductoisomerase (NADP(+)) (340 aa).

In terms of domain architecture, KARI N-terminal Rossmann spans 3 to 183 (VSIYYDKDCD…GGGRTGIIET (181 aa)). Residues 26-29 (FGSQ), Lys-49, Ser-54, and 84-87 (DEIQ) each bind NADP(+). His-109 is an active-site residue. An NADP(+)-binding site is contributed by Gly-135. The region spanning 184 to 329 (TFKAETETDL…RELRAMMPWI (146 aa)) is the KARI C-terminal knotted domain. Mg(2+) is bound by residues Asp-192, Glu-196, Glu-228, and Glu-232. Position 253 (Ser-253) interacts with substrate.

This sequence belongs to the ketol-acid reductoisomerase family. Mg(2+) is required as a cofactor.

It catalyses the reaction (2R)-2,3-dihydroxy-3-methylbutanoate + NADP(+) = (2S)-2-acetolactate + NADPH + H(+). It carries out the reaction (2R,3R)-2,3-dihydroxy-3-methylpentanoate + NADP(+) = (S)-2-ethyl-2-hydroxy-3-oxobutanoate + NADPH + H(+). The protein operates within amino-acid biosynthesis; L-isoleucine biosynthesis; L-isoleucine from 2-oxobutanoate: step 2/4. Its pathway is amino-acid biosynthesis; L-valine biosynthesis; L-valine from pyruvate: step 2/4. Its function is as follows. Involved in the biosynthesis of branched-chain amino acids (BCAA). Catalyzes an alkyl-migration followed by a ketol-acid reduction of (S)-2-acetolactate (S2AL) to yield (R)-2,3-dihydroxy-isovalerate. In the isomerase reaction, S2AL is rearranged via a Mg-dependent methyl migration to produce 3-hydroxy-3-methyl-2-ketobutyrate (HMKB). In the reductase reaction, this 2-ketoacid undergoes a metal-dependent reduction by NADPH to yield (R)-2,3-dihydroxy-isovalerate. In Campylobacter lari (strain RM2100 / D67 / ATCC BAA-1060), this protein is Ketol-acid reductoisomerase (NADP(+)).